The sequence spans 501 residues: Spore development regulator VOSA (501 aa).

Disordered stretches follow at residues 26–55 (GQFG…GQEP), 67–88 (PQRA…IDPP), and 228–274 (AMTT…DTRG). Residues 35-50 (PPQAETQMSAQASAQA) show a composition bias toward polar residues. Positions 52–223 (GQEPEPDYKL…SDQGVRLRVR (172 aa)) constitute a Velvet domain. Basic and acidic residues-rich tracts occupy residues 67 to 85 (PQRA…RKPI) and 237 to 252 (QHAE…DRKQ). Polar residues predominate over residues 253–271 (TSAVSRHSSINENDSTPTD). A Nuclear localization signal motif is present at residues 364-371 (MSSHHGYT). Disordered regions lie at residues 378 to 455 (FAPH…QQTP) and 474 to 501 (PGQL…EPGA).

Belongs to the velvet family. VosA subfamily. As to quaternary structure, forms a heterodimeric complex with VELB; the formation of the VELB-VOSA complex is light-dependent.

The protein resides in the nucleus. Component of the VELB-VOSA heterodimeric complex that plays a dual role in activating genes associated with spore maturation and repressing certain development-associated genes. The complex binds DNA through the DNA-binding domain of VOSA that recognizes an 11-nucleotide consensus sequence 5'-CTGGCCGCGGC-3' consisting of two motifs in the promoters of key developmental regulatory genes. Appears dispensable for the development and pathogenicity. The sequence is that of Spore development regulator VOSA from Pyricularia oryzae (strain 70-15 / ATCC MYA-4617 / FGSC 8958) (Rice blast fungus).